A 318-amino-acid polypeptide reads, in one-letter code: tRNA uridine(34) hydroxylase (318 aa).

The 95-residue stretch at 123-217 (EDDDTVIIDA…YGKDPETKSE (95 aa)) folds into the Rhodanese domain. Catalysis depends on Cys177, which acts as the Cysteine persulfide intermediate.

The protein belongs to the TrhO family.

It catalyses the reaction uridine(34) in tRNA + AH2 + O2 = 5-hydroxyuridine(34) in tRNA + A + H2O. Functionally, catalyzes oxygen-dependent 5-hydroxyuridine (ho5U) modification at position 34 in tRNAs. The protein is tRNA uridine(34) hydroxylase of Staphylococcus aureus (strain COL).